A 399-amino-acid chain; its full sequence is MSETLYTGISQLATPRPGPQRGAAMGDLHIIEDAALLVRGGVIQWVGPRAAAPTATHVHDLGGRAVVPGLVDPHTHAVWAGDRLSDWEAKLQGATYEEILARGGGIRSTMRATAAADVAELVALARPRLASLRASGATTTEVKSGYGLDFDAELRMLRAVRELQAEFELRPTLLIHVPPQEGRAEYVVGVCAELIPQVAREGLAEALDVFCEKEAFSVEETRTMFAAAQAHGLRVKLHADQFHAIGGTELACEVGALSVDHLEASGAAQIAALAASETVATILPGVTLHLGLPAAPGRQLIDSGAIVAIGTDLNPGSSPLFSTQLALALAVRLCLLTPAEALSACTVNAAYALGLSDRGSLSAGQRADFLVLNGQDWREVAYTLGGNAVAEVYLAGAQL.

Polar residues predominate over residues 1–13 (MSETLYTGISQLA). Residues 1 to 20 (MSETLYTGISQLATPRPGPQ) form a disordered region. Residues His-74 and His-76 each coordinate Fe(3+). The Zn(2+) site is built by His-74 and His-76. Residues Arg-83, Tyr-146, and His-176 each contribute to the 4-imidazolone-5-propanoate site. Tyr-146 is an N-formimidoyl-L-glutamate binding site. His-238 lines the Fe(3+) pocket. His-238 contacts Zn(2+). Residue Gln-241 coordinates 4-imidazolone-5-propanoate. Asp-312 is a Fe(3+) binding site. Residue Asp-312 participates in Zn(2+) binding. Residues Asn-314 and Gly-316 each coordinate N-formimidoyl-L-glutamate. Ser-317 is a 4-imidazolone-5-propanoate binding site.

Belongs to the metallo-dependent hydrolases superfamily. HutI family. Requires Zn(2+) as cofactor. It depends on Fe(3+) as a cofactor.

It is found in the cytoplasm. The enzyme catalyses 4-imidazolone-5-propanoate + H2O = N-formimidoyl-L-glutamate. The protein operates within amino-acid degradation; L-histidine degradation into L-glutamate; N-formimidoyl-L-glutamate from L-histidine: step 3/3. In terms of biological role, catalyzes the hydrolytic cleavage of the carbon-nitrogen bond in imidazolone-5-propanoate to yield N-formimidoyl-L-glutamate. It is the third step in the universal histidine degradation pathway. This chain is Imidazolonepropionase, found in Deinococcus radiodurans (strain ATCC 13939 / DSM 20539 / JCM 16871 / CCUG 27074 / LMG 4051 / NBRC 15346 / NCIMB 9279 / VKM B-1422 / R1).